Consider the following 485-residue polypeptide: Dual specificity protein phosphatase CDC14B (485 aa).

Positions 1-38 (MKRKSERRSAWATAPPCSRRSSSSSPGVKKSRSSTPQE) are disordered. Positions 1–54 (MKRKSERRSAWATAPPCSRRSSSSSPGVKKSRSSTPQELHRLEQQDDLYLDITD) match the Nucleolar localization signal motif. Over residues 15–28 (PPCSRRSSSSSPGV) the composition is skewed to low complexity. Residues 44–198 (QQDDLYLDIT…AMQYGFFNFN (155 aa)) are a. Residues 199-212 (SFNLDEYEHYEKAE) form a linker region. The b stretch occupies residues 213 to 379 (NGDFNWIIPE…EGDYFRQKLR (167 aa)). Positions 215-374 (DFNWIIPERF…SSLWLEGDYF (160 aa)) constitute a Tyrosine-protein phosphatase domain. C314 serves as the catalytic Phosphocysteine intermediate. The segment at 402 to 424 (LNGLENQDNQEPEPYSDDDEVSG) is disordered. Positions 409–422 (DNQEPEPYSDDDEV) are enriched in acidic residues.

The protein belongs to the protein-tyrosine phosphatase family. Non-receptor class CDC14 subfamily. In terms of assembly, interacts with FZR1/CDH1.

It is found in the nucleus. The protein resides in the nucleolus. It localises to the nucleoplasm. It catalyses the reaction O-phospho-L-tyrosyl-[protein] + H2O = L-tyrosyl-[protein] + phosphate. It carries out the reaction O-phospho-L-seryl-[protein] + H2O = L-seryl-[protein] + phosphate. The catalysed reaction is O-phospho-L-threonyl-[protein] + H2O = L-threonyl-[protein] + phosphate. Functionally, dual-specificity phosphatase involved in DNA damage response. Essential regulator of the G2 DNA damage checkpoint: following DNA damage, translocates to the nucleus and dephosphorylates FZR1/CDH1, a key activator of the anaphase promoting complex/cyclosome (APC/C). Dephosphorylates SIRT2 around early anaphase. Dephosphorylation of FZR1/CDH1 activates the APC/C, leading to the ubiquitination of PLK1, preventing entry into mitosis. Preferentially dephosphorylates proteins modified by proline-directed kinases. This is Dual specificity protein phosphatase CDC14B (Cdc14b) from Mus musculus (Mouse).